The chain runs to 126 residues: Protein ApaG (126 aa).

One can recognise an ApaG domain in the interval 2–126 (SDSRYKVDVS…FRLAVPGSLH (125 aa)).

The polypeptide is Protein ApaG (Pseudomonas syringae pv. tomato (strain ATCC BAA-871 / DC3000)).